Consider the following 649-residue polypeptide: MFPNDKTPLLDKIKTPAELRQLDRNSLRQLADELRKETISAVGVTGGHLGSGLGVIELTVALHYVFNTPKDALVWDVGHQTYPHKILTGRRDRIRTLRQRDGLSGFTQRAESEYDAFGAAHSSTSISAALGFAMASKLSDSDDKAVAIIGDGSMTAGMAYEAMNNAKAAGKRLIVILNDNEMSISPPVGALSSYLSRLISSRPFMNLRDIMRGVVNRMPKGLATAARKADEYARGMATGGTFFEELGFYYVGPVDGHNLDQLIPVLENVRDAKDGPILVHVVTRKGQGYAPAEAAKDKYHAVQRLDVVSGKQAKAPPGPPSYTSVFSEQLIKEAKQDDKIVTITAAMPTGTGLDRFQQYFPERMFDVGIAEQHAVTFAAGLAAAGYKPFCCLYSTFLQRGYDQLVHDVAIQNLPVRFAVDRAGLVGADGATHAGSFDLAFMVNLPNMVVMAPSDERELANMVHSMAHYDQGPISVRYPRGNGVGVSLEGEKEILPIGKGRLIRRGKKVAILSLGTRLEESLKAADRLDAQGLSTSVADMRFAKPLDEALTRQLLKSHQVIITIEEGALGGFATQVLTMASDEGLMDDGLKIRTLRLPDRFQPQDKQERQYAEAGLDADGIVAAVISALHRNSKPVEVVEMANMGSIARA.

Residues histidine 79 and 120–122 (AHS) contribute to the thiamine diphosphate site. Aspartate 151 is a binding site for Mg(2+). Residues 152 to 153 (GS), asparagine 180, tyrosine 289, and glutamate 371 each bind thiamine diphosphate. Asparagine 180 lines the Mg(2+) pocket.

The protein belongs to the transketolase family. DXPS subfamily. Homodimer. The cofactor is Mg(2+). Thiamine diphosphate is required as a cofactor.

It carries out the reaction D-glyceraldehyde 3-phosphate + pyruvate + H(+) = 1-deoxy-D-xylulose 5-phosphate + CO2. Its pathway is metabolic intermediate biosynthesis; 1-deoxy-D-xylulose 5-phosphate biosynthesis; 1-deoxy-D-xylulose 5-phosphate from D-glyceraldehyde 3-phosphate and pyruvate: step 1/1. Its function is as follows. Catalyzes the acyloin condensation reaction between C atoms 2 and 3 of pyruvate and glyceraldehyde 3-phosphate to yield 1-deoxy-D-xylulose-5-phosphate (DXP). In Zymomonas mobilis subsp. mobilis (strain ATCC 31821 / ZM4 / CP4), this protein is 1-deoxy-D-xylulose-5-phosphate synthase 1.